Reading from the N-terminus, the 216-residue chain is FMN-dependent NADH:quinone oxidoreductase 2 (216 aa).

FMN-binding positions include Ser-9, 15-17 (SVS), 96-99 (MYNF), and 140-143 (SRGG).

It belongs to the azoreductase type 1 family. Homodimer. The cofactor is FMN.

The enzyme catalyses 2 a quinone + NADH + H(+) = 2 a 1,4-benzosemiquinone + NAD(+). It catalyses the reaction N,N-dimethyl-1,4-phenylenediamine + anthranilate + 2 NAD(+) = 2-(4-dimethylaminophenyl)diazenylbenzoate + 2 NADH + 2 H(+). Quinone reductase that provides resistance to thiol-specific stress caused by electrophilic quinones. Functionally, also exhibits azoreductase activity. Catalyzes the reductive cleavage of the azo bond in aromatic azo compounds to the corresponding amines. The polypeptide is FMN-dependent NADH:quinone oxidoreductase 2 (Xanthomonas axonopodis pv. citri (strain 306)).